The sequence spans 141 residues: Protein C19orf12 homolog (141 aa).

A helical membrane pass occupies residues 33-53; it reads LVAAAGAFLGGLVGGPPGIAV.

It belongs to the C19orf12 family.

It is found in the mitochondrion. The protein resides in the mitochondrion membrane. Its subcellular location is the endoplasmic reticulum. The protein localises to the cytoplasm. It localises to the cytosol. The sequence is that of Protein C19orf12 homolog from Xenopus tropicalis (Western clawed frog).